Consider the following 305-residue polypeptide: Homoserine kinase (305 aa).

Residue 90-100 participates in ATP binding; that stretch reads PLARGLGSSAS.

It belongs to the GHMP kinase family. Homoserine kinase subfamily.

The protein resides in the cytoplasm. The enzyme catalyses L-homoserine + ATP = O-phospho-L-homoserine + ADP + H(+). It participates in amino-acid biosynthesis; L-threonine biosynthesis; L-threonine from L-aspartate: step 4/5. In terms of biological role, catalyzes the ATP-dependent phosphorylation of L-homoserine to L-homoserine phosphate. This is Homoserine kinase from Staphylococcus haemolyticus (strain JCSC1435).